We begin with the raw amino-acid sequence, 440 residues long: Glycerophosphocholine cholinephosphodiesterase ENPP6 (440 aa).

Residues Met1–Ala22 form the signal peptide. Substrate-binding residues include Asp32, Ser71, and Asn92. Zn(2+) contacts are provided by Asp32 and Ser71. The active-site Nucleophile is the Ser71. Ser71 bears the Phosphoserine mark. 2 N-linked (GlcNAc...) asparagine glycosylation sites follow: Asn100 and Asn118. An intrachain disulfide couples Cys142 to Cys154. Asp193 is a binding site for substrate. Zn(2+) is bound by residues Asp193, His197, Asp240, and His241. Residue His241 participates in substrate binding. N-linked (GlcNAc...) asparagine glycosylation is present at Asn341. His354 is a binding site for substrate. His354 serves as a coordination point for Zn(2+). Asn404 carries an N-linked (GlcNAc...) asparagine glycan. The GPI-anchor amidated serine moiety is linked to residue Ser419. Positions Thr420 to Ala440 are cleaved as a propeptide — removed in mature form.

This sequence belongs to the nucleotide pyrophosphatase/phosphodiesterase family. As to quaternary structure, homodimer; disulfide-linked. Homotetramer. The cofactor is Zn(2+). Predominantly expressed in kidney and brain. In the kidney, expressed specifically in the proximal tubules and thin descending limbs of Henle (at protein level).

It localises to the cell membrane. It carries out the reaction sn-glycerol 3-phosphocholine + H2O = phosphocholine + glycerol + H(+). The enzyme catalyses a 1-acyl-sn-glycero-3-phosphocholine + H2O = a 1-acyl-sn-glycerol + phosphocholine + H(+). It catalyses the reaction a 1-O-alkyl-sn-glycero-3-phosphocholine + H2O = a 1-O-alkyl-sn-glycerol + phosphocholine + H(+). The catalysed reaction is 1-dodecanoyl-sn-glycero-3-phosphocholine + H2O = 1-dodecanoyl-sn-glycerol + phosphocholine + H(+). It carries out the reaction 1-hexadecanoyl-sn-glycero-3-phosphocholine + H2O = 1-hexadecanoyl-sn-glycerol + phosphocholine + H(+). The enzyme catalyses 1-(5Z,8Z,11Z,14Z-eicosatetraenoyl)-sn-glycero-3-phosphocholine + H2O = 1-(5Z,8Z,11Z,14Z-eicosatetraenoyl)-sn-glycerol + phosphocholine + H(+). It catalyses the reaction 1-tetradecanoyl-sn-glycero-3-phosphocholine + H2O = 1-tetradecanoyl-sn-glycerol + phosphocholine + H(+). The catalysed reaction is sphing-4-enine-phosphocholine + H2O = sphing-4-enine + phosphocholine + H(+). It carries out the reaction 1-(9Z-octadecenoyl)-sn-glycero-3-phosphocholine + H2O = 1-(9Z-octadecenoyl)-sn-glycerol + phosphocholine + H(+). The enzyme catalyses 1-(9Z,12Z)-octadecadienoyl-sn-glycero-3-phosphocholine + H2O = 1-(9Z,12Z-octadecadienoyl)-sn-glycerol + phosphocholine + H(+). It catalyses the reaction glycero-2-phosphocholine + H2O = phosphocholine + glycerol + H(+). With respect to regulation, inhibited by EDTA and EGTA in vitro. In terms of biological role, choline-specific glycerophosphodiesterase that hydrolyzes glycerophosphocholine (GPC) and lysophosphatidylcholine (LPC) and contributes to supplying choline to the cells. Has a preference for LPC with short (12:0 and 14:0) or polyunsaturated (18:2 and 20:4) fatty acids. In vitro, hydrolyzes only choline-containing lysophospholipids, such as sphingosylphosphorylcholine (SPC), platelet-activating factor (PAF) and lysoPAF, but not other lysophospholipids. The chain is Glycerophosphocholine cholinephosphodiesterase ENPP6 from Homo sapiens (Human).